Reading from the N-terminus, the 1449-residue chain is Gag-Pol polyprotein (1449 aa).

A lipid anchor (N-myristoyl glycine; by host) is attached at Gly2. Residues 7-31 (VLTGGKLDQWEAIYLRPGGKKKYRL) are interaction with Gp41. The segment at 8 to 43 (LTGGKLDQWEAIYLRPGGKKKYRLKHLVWASRELER) is interaction with host CALM1. The interval 12–19 (KLDQWEAI) is interaction with host AP3D1. The interval 14–33 (DQWEAIYLRPGGKKKYRLKH) is interaction with membrane phosphatidylinositol 4,5-bisphosphate and RNA. The Nuclear export signal signature appears at 16-22 (WEAIYLR). The Nuclear localization signal signature appears at 26-32 (KKKYRLK). The segment at 73–77 (EGLRS) is interaction with membrane phosphatidylinositol 4,5-bisphosphate. Residues 105–119 (KEKQEQHKSEPKKPE) show a composition bias toward basic and acidic residues. A disordered region spans residues 105-128 (KEKQEQHKSEPKKPEAGTAAAADS). At Tyr134 the chain carries Phosphotyrosine; by host. Residues 191-229 (NTVGGHQAAMQMLKEVINEEAAEWDRTHPAPVGPLPPGQ) form an interaction with human PPIA/CYPA and NUP153 region. A dimerization/Multimerization of capsid protein p24 region spans residues 279 to 365 (YSPVSILEIK…GGPAHKARVL (87 aa)). CCHC-type zinc fingers lie at residues 392–409 (IKCF…NCKA) and 413–430 (RGCW…DCKN). A disordered region spans residues 445 to 492 (QRETRKLPPDNNKERAHSPATRELWVSGGEEHTGKGDAGEPGEDRDLS). 2 stretches are compositionally biased toward basic and acidic residues: residues 446 to 461 (RETR…ERAH) and 473 to 491 (GEEH…DRDL). The tract at residues 499 to 503 (PQITL) is dimerization of protease. Residues 518 to 587 (REALLDTGAD…TPVNIIGRNF (70 aa)) enclose the Peptidase A2 domain. Asp523 serves as the catalytic For protease activity; shared with dimeric partner. Dimerization of protease regions lie at residues 547–553 (GIGGFIK) and 586–598 (NFLT…LNFP). A Reverse transcriptase domain is found at 641 to 831 (EGKISRIGPE…PPFLWMGYEL (191 aa)). Asp707, Asp782, and Asp783 together coordinate Mg(2+). The segment at 824 to 832 (FLWMGYELH) is RT 'primer grip'. Residues 995–1011 (WETWWTEHWQATWIPEW) carry the Tryptophan repeat motif motif. Residues 1031–1154 (ISGAETYYVD…VDXLVSSGIR (124 aa)) form the RNase H type-1 domain. Asp1040, Glu1075, Asp1095, and Asp1146 together coordinate Mg(2+). The Integrase-type zinc-finger motif lies at 1160-1201 (DGIEKAQEEHERYHSNWKAMASDFNLPPIVAKEIVASCDKCQ). Zn(2+)-binding residues include His1169, His1173, Cys1197, and Cys1200. One can recognise an Integrase catalytic domain in the interval 1211-1361 (INCSPGVWQL…TAGERIIDII (151 aa)). The Mg(2+) site is built by Asp1221, Asp1273, and Glu1309. The integrase-type DNA-binding region spans 1380–1427 (FXVYYRDSRDPIWKGPAKLLWKGEGAVVIQDNGDIKVVPRRKAKIIRD).

Homotrimer; further assembles as hexamers of trimers. Interacts with gp41 (via C-terminus). Interacts with host CALM1; this interaction induces a conformational change in the Matrix protein, triggering exposure of the myristate group. Interacts with host AP3D1; this interaction allows the polyprotein trafficking to multivesicular bodies during virus assembly. Part of the pre-integration complex (PIC) which is composed of viral genome, matrix protein, Vpr and integrase. In terms of assembly, homodimer; the homodimer further multimerizes as homohexamers or homopentamers. Interacts with human PPIA/CYPA; This interaction stabilizes the capsid. Interacts with human NUP153. Interacts with host PDZD8; this interaction stabilizes the capsid. Interacts with monkey TRIM5; this interaction destabilizes the capsid. As to quaternary structure, homodimer, whose active site consists of two apposed aspartic acid residues. Heterodimer of p66 RT and p51 RT (RT p66/p51). Heterodimerization of RT is essential for DNA polymerase activity. The overall folding of the subdomains is similar in p66 RT and p51 RT but the spatial arrangements of the subdomains are dramatically different. In terms of assembly, homotetramer; may further associate as a homohexadecamer. Part of the pre-integration complex (PIC) which is composed of viral genome, matrix protein, Vpr and integrase. Interacts with human SMARCB1/INI1 and human PSIP1/LEDGF isoform 1. Interacts with human KPNA3; this interaction might play a role in nuclear import of the pre-integration complex. Interacts with human NUP153; this interaction might play a role in nuclear import of the pre-integration complex. Requires Mg(2+) as cofactor. Specific enzymatic cleavages by the viral protease yield mature proteins. The protease is released by autocatalytic cleavage. The polyprotein is cleaved during and after budding, this process is termed maturation. Proteolytic cleavage of p66 RT removes the RNase H domain to yield the p51 RT subunit. Nucleocapsid protein p7 might be further cleaved after virus entry. Post-translationally, tyrosine phosphorylated presumably in the virion by a host kinase. Phosphorylation is apparently not a major regulator of membrane association. In terms of processing, phosphorylated possibly by host MAPK1; this phosphorylation is necessary for Pin1-mediated virion uncoating. Methylated by host PRMT6, impairing its function by reducing RNA annealing and the initiation of reverse transcription.

Its subcellular location is the host cell membrane. The protein localises to the host endosome. It localises to the host multivesicular body. It is found in the virion membrane. The protein resides in the host nucleus. Its subcellular location is the host cytoplasm. The protein localises to the virion. The catalysed reaction is Specific for a P1 residue that is hydrophobic, and P1' variable, but often Pro.. It catalyses the reaction Endohydrolysis of RNA in RNA/DNA hybrids. Three different cleavage modes: 1. sequence-specific internal cleavage of RNA. Human immunodeficiency virus type 1 and Moloney murine leukemia virus enzymes prefer to cleave the RNA strand one nucleotide away from the RNA-DNA junction. 2. RNA 5'-end directed cleavage 13-19 nucleotides from the RNA end. 3. DNA 3'-end directed cleavage 15-20 nucleotides away from the primer terminus.. The enzyme catalyses 3'-end directed exonucleolytic cleavage of viral RNA-DNA hybrid.. It carries out the reaction DNA(n) + a 2'-deoxyribonucleoside 5'-triphosphate = DNA(n+1) + diphosphate. Its activity is regulated as follows. Protease: The viral protease is inhibited by many synthetic protease inhibitors (PIs), such as amprenavir, atazanavir, indinavir, loprinavir, nelfinavir, ritonavir and saquinavir. Use of protease inhibitors in tritherapy regimens permit more ambitious therapeutic strategies. Reverse transcriptase/ribonuclease H: RT can be inhibited either by nucleoside RT inhibitors (NRTIs) or by non nucleoside RT inhibitors (NNRTIs). NRTIs act as chain terminators, whereas NNRTIs inhibit DNA polymerization by binding a small hydrophobic pocket near the RT active site and inducing an allosteric change in this region. Classical NRTIs are abacavir, adefovir (PMEA), didanosine (ddI), lamivudine (3TC), stavudine (d4T), tenofovir (PMPA), zalcitabine (ddC), and zidovudine (AZT). Classical NNRTIs are atevirdine (BHAP U-87201E), delavirdine, efavirenz (DMP-266), emivirine (I-EBU), and nevirapine (BI-RG-587). The tritherapies used as a basic effective treatment of AIDS associate two NRTIs and one NNRTI. In terms of biological role, mediates, with Gag polyprotein, the essential events in virion assembly, including binding the plasma membrane, making the protein-protein interactions necessary to create spherical particles, recruiting the viral Env proteins, and packaging the genomic RNA via direct interactions with the RNA packaging sequence (Psi). Gag-Pol polyprotein may regulate its own translation, by the binding genomic RNA in the 5'-UTR. At low concentration, the polyprotein would promote translation, whereas at high concentration, the polyprotein would encapsidate genomic RNA and then shut off translation. Targets the polyprotein to the plasma membrane via a multipartite membrane-binding signal, that includes its myristoylated N-terminus. Matrix protein is part of the pre-integration complex. Implicated in the release from host cell mediated by Vpu. Binds to RNA. Functionally, forms the conical core that encapsulates the genomic RNA-nucleocapsid complex in the virion. Most core are conical, with only 7% tubular. The core is constituted by capsid protein hexamer subunits. The core is disassembled soon after virion entry. Host restriction factors such as TRIM5-alpha or TRIMCyp bind retroviral capsids and cause premature capsid disassembly, leading to blocks in reverse transcription. Capsid restriction by TRIM5 is one of the factors which restricts HIV-1 to the human species. Host PIN1 apparently facilitates the virion uncoating. On the other hand, interactions with PDZD8 or CYPA stabilize the capsid. Its function is as follows. Encapsulates and protects viral dimeric unspliced genomic RNA (gRNA). Binds these RNAs through its zinc fingers. Acts as a nucleic acid chaperone which is involved in rearangement of nucleic acid secondary structure during gRNA retrotranscription. Also facilitates template switch leading to recombination. As part of the polyprotein, participates in gRNA dimerization, packaging, tRNA incorporation and virion assembly. In terms of biological role, aspartyl protease that mediates proteolytic cleavages of Gag and Gag-Pol polyproteins during or shortly after the release of the virion from the plasma membrane. Cleavages take place as an ordered, step-wise cascade to yield mature proteins. This process is called maturation. Displays maximal activity during the budding process just prior to particle release from the cell. Also cleaves Nef and Vif, probably concomitantly with viral structural proteins on maturation of virus particles. Hydrolyzes host EIF4GI and PABP1 in order to shut off the capped cellular mRNA translation. The resulting inhibition of cellular protein synthesis serves to ensure maximal viral gene expression and to evade host immune response. Also mediates cleavage of host YTHDF3. Mediates cleavage of host CARD8, thereby activating the CARD8 inflammasome, leading to the clearance of latent HIV-1 in patient CD4(+) T-cells after viral reactivation; in contrast, HIV-1 can evade CARD8-sensing when its protease remains inactive in infected cells prior to viral budding. Multifunctional enzyme that converts the viral RNA genome into dsDNA in the cytoplasm, shortly after virus entry into the cell. This enzyme displays a DNA polymerase activity that can copy either DNA or RNA templates, and a ribonuclease H (RNase H) activity that cleaves the RNA strand of RNA-DNA heteroduplexes in a partially processive 3' to 5' endonucleasic mode. Conversion of viral genomic RNA into dsDNA requires many steps. A tRNA(3)-Lys binds to the primer-binding site (PBS) situated at the 5'-end of the viral RNA. RT uses the 3' end of the tRNA primer to perform a short round of RNA-dependent minus-strand DNA synthesis. The reading proceeds through the U5 region and ends after the repeated (R) region which is present at both ends of viral RNA. The portion of the RNA-DNA heteroduplex is digested by the RNase H, resulting in a ssDNA product attached to the tRNA primer. This ssDNA/tRNA hybridizes with the identical R region situated at the 3' end of viral RNA. This template exchange, known as minus-strand DNA strong stop transfer, can be either intra- or intermolecular. RT uses the 3' end of this newly synthesized short ssDNA to perform the RNA-dependent minus-strand DNA synthesis of the whole template. RNase H digests the RNA template except for two polypurine tracts (PPTs) situated at the 5'-end and near the center of the genome. It is not clear if both polymerase and RNase H activities are simultaneous. RNase H probably can proceed both in a polymerase-dependent (RNA cut into small fragments by the same RT performing DNA synthesis) and a polymerase-independent mode (cleavage of remaining RNA fragments by free RTs). Secondly, RT performs DNA-directed plus-strand DNA synthesis using the PPTs that have not been removed by RNase H as primers. PPTs and tRNA primers are then removed by RNase H. The 3' and 5' ssDNA PBS regions hybridize to form a circular dsDNA intermediate. Strand displacement synthesis by RT to the PBS and PPT ends produces a blunt ended, linear dsDNA copy of the viral genome that includes long terminal repeats (LTRs) at both ends. Functionally, catalyzes viral DNA integration into the host chromosome, by performing a series of DNA cutting and joining reactions. This enzyme activity takes place after virion entry into a cell and reverse transcription of the RNA genome in dsDNA. The first step in the integration process is 3' processing. This step requires a complex comprising the viral genome, matrix protein, Vpr and integrase. This complex is called the pre-integration complex (PIC). The integrase protein removes 2 nucleotides from each 3' end of the viral DNA, leaving recessed CA OH's at the 3' ends. In the second step, the PIC enters cell nucleus. This process is mediated through integrase and Vpr proteins, and allows the virus to infect a non dividing cell. This ability to enter the nucleus is specific of lentiviruses, other retroviruses cannot and rely on cell division to access cell chromosomes. In the third step, termed strand transfer, the integrase protein joins the previously processed 3' ends to the 5' ends of strands of target cellular DNA at the site of integration. The 5'-ends are produced by integrase-catalyzed staggered cuts, 5 bp apart. A Y-shaped, gapped, recombination intermediate results, with the 5'-ends of the viral DNA strands and the 3' ends of target DNA strands remaining unjoined, flanking a gap of 5 bp. The last step is viral DNA integration into host chromosome. This involves host DNA repair synthesis in which the 5 bp gaps between the unjoined strands are filled in and then ligated. Since this process occurs at both cuts flanking the HIV genome, a 5 bp duplication of host DNA is produced at the ends of HIV-1 integration. Alternatively, Integrase may catalyze the excision of viral DNA just after strand transfer, this is termed disintegration. This is Gag-Pol polyprotein (gag-pol) from Human immunodeficiency virus type 1 group N (isolate YBF106) (HIV-1).